A 326-amino-acid chain; its full sequence is Endo-beta-1,4-glucanase A (326 aa).

The N-terminal stretch at methionine 1–glycine 19 is a signal peptide. Glutamate 150 functions as the Proton donor in the catalytic mechanism. Glutamate 257 acts as the Nucleophile in catalysis.

Belongs to the glycosyl hydrolase 5 (cellulase A) family.

Its subcellular location is the secreted. It carries out the reaction Endohydrolysis of (1-&gt;4)-beta-D-glucosidic linkages in cellulose, lichenin and cereal beta-D-glucans.. Functionally, has endoglucanase activity on substrates containing beta-1,4 glycosidic bonds, like in carboxymethylcellulose (CMC), hydroxyethylcellulose (HEC) and beta-glucan. Involved in the degradation of complex natural cellulosic substrates. The chain is Endo-beta-1,4-glucanase A (eglA) from Emericella nidulans (strain FGSC A4 / ATCC 38163 / CBS 112.46 / NRRL 194 / M139) (Aspergillus nidulans).